We begin with the raw amino-acid sequence, 359 residues long: UDP-N-acetylglucosamine--N-acetylmuramyl-(pentapeptide) pyrophosphoryl-undecaprenol N-acetylglucosamine transferase (359 aa).

UDP-N-acetyl-alpha-D-glucosamine-binding positions include Thr13–Gly15, Asn125, Arg161, Ser193, Ile241, and Gln285.

This sequence belongs to the glycosyltransferase 28 family. MurG subfamily.

The protein localises to the cell membrane. The enzyme catalyses di-trans,octa-cis-undecaprenyl diphospho-N-acetyl-alpha-D-muramoyl-L-alanyl-D-glutamyl-meso-2,6-diaminopimeloyl-D-alanyl-D-alanine + UDP-N-acetyl-alpha-D-glucosamine = di-trans,octa-cis-undecaprenyl diphospho-[N-acetyl-alpha-D-glucosaminyl-(1-&gt;4)]-N-acetyl-alpha-D-muramoyl-L-alanyl-D-glutamyl-meso-2,6-diaminopimeloyl-D-alanyl-D-alanine + UDP + H(+). It functions in the pathway cell wall biogenesis; peptidoglycan biosynthesis. In terms of biological role, cell wall formation. Catalyzes the transfer of a GlcNAc subunit on undecaprenyl-pyrophosphoryl-MurNAc-pentapeptide (lipid intermediate I) to form undecaprenyl-pyrophosphoryl-MurNAc-(pentapeptide)GlcNAc (lipid intermediate II). This Corynebacterium diphtheriae (strain ATCC 700971 / NCTC 13129 / Biotype gravis) protein is UDP-N-acetylglucosamine--N-acetylmuramyl-(pentapeptide) pyrophosphoryl-undecaprenol N-acetylglucosamine transferase.